A 169-amino-acid polypeptide reads, in one-letter code: Peptide deformylase (169 aa).

The Fe cation site is built by cysteine 91 and histidine 133. Residue glutamate 134 is part of the active site. Histidine 137 serves as a coordination point for Fe cation.

It belongs to the polypeptide deformylase family. The cofactor is Fe(2+).

The catalysed reaction is N-terminal N-formyl-L-methionyl-[peptide] + H2O = N-terminal L-methionyl-[peptide] + formate. Functionally, removes the formyl group from the N-terminal Met of newly synthesized proteins. Requires at least a dipeptide for an efficient rate of reaction. N-terminal L-methionine is a prerequisite for activity but the enzyme has broad specificity at other positions. The chain is Peptide deformylase from Salmonella agona (strain SL483).